Consider the following 332-residue polypeptide: tRNA-dihydrouridine(20/20a) synthase (332 aa).

Residues 19 to 21 (PML) and Q71 contribute to the FMN site. C101 functions as the Proton donor in the catalytic mechanism. Residues K140, H173, 213 to 215 (NGG), and 235 to 236 (GR) contribute to the FMN site.

This sequence belongs to the Dus family. DusA subfamily. Requires FMN as cofactor.

It catalyses the reaction 5,6-dihydrouridine(20) in tRNA + NADP(+) = uridine(20) in tRNA + NADPH + H(+). It carries out the reaction 5,6-dihydrouridine(20) in tRNA + NAD(+) = uridine(20) in tRNA + NADH + H(+). The catalysed reaction is 5,6-dihydrouridine(20a) in tRNA + NADP(+) = uridine(20a) in tRNA + NADPH + H(+). The enzyme catalyses 5,6-dihydrouridine(20a) in tRNA + NAD(+) = uridine(20a) in tRNA + NADH + H(+). Functionally, catalyzes the synthesis of 5,6-dihydrouridine (D), a modified base found in the D-loop of most tRNAs, via the reduction of the C5-C6 double bond in target uridines. Specifically modifies U20 and U20a in tRNAs. The sequence is that of tRNA-dihydrouridine(20/20a) synthase from Salmonella typhimurium (strain LT2 / SGSC1412 / ATCC 700720).